The sequence spans 603 residues: Carbon catabolite repressor protein 4 homolog 2 (603 aa).

Positions 115–136 (ENNANEDDDLNRNNSAGSGSLA) are disordered. Residues 126 to 136 (RNNSAGSGSLA) show a composition bias toward low complexity. Position 302 (E302) interacts with Mg(2+).

Belongs to the CCR4/nocturin family. In terms of assembly, component of the CCR4-NOT complex, at least composed of CRR4 and CAF1 proteins. Requires Mg(2+) as cofactor.

It is found in the nucleus. Its subcellular location is the cytoplasm. It catalyses the reaction Exonucleolytic cleavage of poly(A) to 5'-AMP.. Functionally, acts as a catalytic component of the CCR4-NOT core complex, which in the nucleus seems to be a general transcription factor, and in the cytoplasm the major mRNA deadenylase involved in mRNA turnover. This chain is Carbon catabolite repressor protein 4 homolog 2 (CCR4-2), found in Arabidopsis thaliana (Mouse-ear cress).